Reading from the N-terminus, the 315-residue chain is MPSYRPPKIASSEITPRQVYLRRREFLGAATLGAMALYGAGKASAAAFSAVESKYKVDEKTTPIKDVTTYNNFYEFGLDKGDPAALSGEFKPLPWAVKVDGMVNKPGTFDVEALIKEFPIEERTYRMRCVEAWSMVIPWNGFPLAALLNKVEPLGSAKYVAFETVVRPEEMPGQKGFFQSLDWPYVEGLRLDEARHPLTLLAVGLYGETLPNQNGAPIRLVVPWKYGFKGIKSIVRITLTDQQPKNTWQVTNPQEYGFYANVNPAVDHPRWSQASERRIGGSGFFGASRRPTLPFNGYADEVASLYAGMDLKANF.

Residues M1–A45 constitute a signal peptide (tat-type signal). Mo-molybdopterin-binding positions include N71, Y74–E75, C129, T164, N214, R219, and G230–K232.

This sequence belongs to the MsrP family. Heterodimer of a catalytic subunit (MsrP) and a heme-binding subunit (MsrQ). Mo-molybdopterin serves as cofactor. Post-translationally, predicted to be exported by the Tat system. The position of the signal peptide cleavage has not been experimentally proven.

Its subcellular location is the periplasm. The catalysed reaction is L-methionyl-[protein] + a quinone + H2O = L-methionyl-(S)-S-oxide-[protein] + a quinol. It carries out the reaction L-methionyl-[protein] + a quinone + H2O = L-methionyl-(R)-S-oxide-[protein] + a quinol. Part of the MsrPQ system that repairs oxidized periplasmic proteins containing methionine sulfoxide residues (Met-O), using respiratory chain electrons. Thus protects these proteins from oxidative-stress damage caused by reactive species of oxygen and chlorine generated by the host defense mechanisms. MsrPQ is essential for the maintenance of envelope integrity under bleach stress, rescuing a wide series of structurally unrelated periplasmic proteins from methionine oxidation. The catalytic subunit MsrP is non-stereospecific, being able to reduce both (R-) and (S-) diastereoisomers of methionine sulfoxide. In Rhizobium etli (strain ATCC 51251 / DSM 11541 / JCM 21823 / NBRC 15573 / CFN 42), this protein is Protein-methionine-sulfoxide reductase catalytic subunit MsrP.